A 371-amino-acid polypeptide reads, in one-letter code: Chemerin-like receptor 1 (371 aa).

Topologically, residues 1–39 (MEYDAYNDSGIYDDEYSDGFGYFVDLEEASPWEAKVAPV) are extracellular. An N-linked (GlcNAc...) asparagine glycan is attached at Asn-7. Residues 40 to 62 (FLVVIYSLVCFLGLLGNGLVIVI) traverse the membrane as a helical segment. Residues 63-73 (ATFKMKKTVNT) are Cytoplasmic-facing. The chain crosses the membrane as a helical span at residues 74 to 95 (VWFVNLAVADFLFNIFLPMHIT). The Extracellular portion of the chain corresponds to 96–112 (YAAMDYHWVFGKAMCKI). Cys-110 and Cys-187 are oxidised to a cystine. The chain crosses the membrane as a helical span at residues 113–133 (SNFLLSHNMYTSVFLLTVISF). Over 134-152 (DRCISVLLPVWSQNHRSIR) the chain is Cytoplasmic. The helical transmembrane segment at 153-174 (LAYMTCSAVWVLAFFLSSPSLV) threads the bilayer. Topologically, residues 175–222 (FRDTANIHGKITCFNNFSLAAPESSPHPAHSQVVSTGYSRHVAVTVTR) are extracellular. The N-linked (GlcNAc...) asparagine glycan is linked to Asn-190. A helical transmembrane segment spans residues 223 to 243 (FLCGFLIPVFIITACYLTIVF). At 244–259 (KLQRNRLAKNKKPFKI) the chain is on the cytoplasmic side. A helical membrane pass occupies residues 260 to 280 (IITIIITFFLCWCPYHTLYLL). The Extracellular portion of the chain corresponds to 281-298 (ELHHTAVPSSVFSLGLPL). Residues 299–318 (ATAVAIANSCMNPILYVFMG) form a helical membrane-spanning segment. The Cytoplasmic portion of the chain corresponds to 319-371 (HDFRKFKVALFSRLANALSEDTGPSSYPSHRSFTKMSSLNEKASVNEKETSTL). Ser-337 bears the Phosphoserine mark. Thr-340 carries the post-translational modification Phosphothreonine. Phosphoserine occurs at positions 347, 350, and 356. Phosphothreonine is present on Thr-370.

Belongs to the chemokine-like receptor (CMKLR) family. In terms of tissue distribution, expressed in the differentiated adipocytes (at protein level). Ubiquitous. Highly expressed in adipose tissue and immature plasmacytoid dendritic cells (DCs) and at lower levels in myeloid DCs, macrophages, and NK cells. Expressed on macrophages isolated from different tissues, including peritoneal cavities, pleural cavities and spleen.

It localises to the cell membrane. Functionally, receptor for the chemoattractant adipokine chemerin/RARRES2 and for the omega-3 fatty acid derived molecule resolvin E1. Interaction with RARRES2 initiates activation of G proteins G(i)/G(o) and beta-arrestin pathways inducing cellular responses via second messenger pathways such as intracellular calcium mobilization, phosphorylation of MAP kinases MAPK1/MAPK3 (ERK1/2), TYRO3, MAPK14/P38MAPK and PI3K leading to multifunctional effects, like, reduction of immune responses, enhancing of adipogenesis and angionesis. Resolvin E1 down-regulates cytokine production in macrophages by reducing the activation of MAPK1/3 (ERK1/2) and NF-kappa-B. Positively regulates adipogenesis and adipocyte metabolism. In Mus musculus (Mouse), this protein is Chemerin-like receptor 1 (Cmklr1).